We begin with the raw amino-acid sequence, 499 residues long: Probable cytochrome P450 cyp-35D1 (499 aa).

Heme is bound at residue cysteine 444.

It belongs to the cytochrome P450 family. It depends on heme as a cofactor. Expressed in hypodermis, intestine and vulva upon thiabendazole (TBZ) exposure.

In terms of biological role, cytochromes P450 are a group of heme-thiolate monooxygenases. They oxidize a variety of structurally unrelated compounds, including steroids, fatty acids, and xenobiotics. Involved in the oxidative metabolism of thiabendazole (TBZ). Catalyzes the conversion of TBZ to its hydroxylated form. The protein is Probable cytochrome P450 cyp-35D1 of Caenorhabditis elegans.